Here is a 335-residue protein sequence, read N- to C-terminus: Adenosine deaminase (335 aa).

Positions 12 and 14 each coordinate Zn(2+). Residues His14 and Asp16 each contribute to the substrate site. Residue His197 coordinates Zn(2+). Residue Glu200 is the Proton donor of the active site. Asp278 contributes to the Zn(2+) binding site.

It belongs to the metallo-dependent hydrolases superfamily. Adenosine and AMP deaminases family. Adenosine deaminase subfamily. The cofactor is Zn(2+).

The enzyme catalyses adenosine + H2O + H(+) = inosine + NH4(+). It catalyses the reaction 2'-deoxyadenosine + H2O + H(+) = 2'-deoxyinosine + NH4(+). In terms of biological role, catalyzes the hydrolytic deamination of adenosine and 2-deoxyadenosine. This chain is Adenosine deaminase, found in Clostridium botulinum (strain Loch Maree / Type A3).